The following is a 390-amino-acid chain: Protein NDRG4-A (390 aa).

Positions 356-390 (LTSASSVDGSRPRPCTQSESSDGIGQINHTMEVSC) are disordered. Over residues 370-390 (CTQSESSDGIGQINHTMEVSC) the composition is skewed to polar residues.

It belongs to the NDRG family.

The protein resides in the cytoplasm. It localises to the cytosol. In terms of biological role, contributes to the maintenance of intracerebral BDNF levels within the normal range. May enhance growth factor-induced ERK1 and ERK2 phosphorylation. May attenuate growth factor-promoted ELK1 phosphorylation in a microtubule-dependent manner. The chain is Protein NDRG4-A (ndrg4-a) from Xenopus laevis (African clawed frog).